The primary structure comprises 261 residues: uncharacterized protein (261 aa).

The 127-residue stretch at 135 to 261 (LVLKRIDEDI…VTEYTIYYSG (127 aa)) folds into the N-acetyltransferase domain.

The protein belongs to the acetyltransferase family.

This is an uncharacterized protein from Bacillus subtilis (strain 168).